The chain runs to 232 residues: UPF0177 protein in abiGi 5'region (232 aa).

6 helical membrane passes run 12–32 (YLSL…ILAY), 47–67 (VVAT…GILI), 86–106 (LLFL…SYTY), 124–144 (SIQI…APIF), 165–185 (IVSC…LIVY), and 206–226 (ILVH…LQVI).

This sequence belongs to the UPF0177 family.

It localises to the cell membrane. The function of this protein is currently unknown, but it has been shown that it is not necessary for phage resistance. The protein is UPF0177 protein in abiGi 5'region of Lactococcus lactis subsp. cremoris (Streptococcus cremoris).